Consider the following 527-residue polypeptide: MSYMIAVPDMLSSAAGDLASIGSSINASTRAAAAATTRLLPAAADEVSAHIAALFSGHGEGYQAIARQMAAFHDQFTLALTSSAGAYASAEATNVEQQVLGLINAPTQALLGRPLIGNGADGTAANPNGGAGGLLYGNGGNGFSQTTAGLTGGTGGSAGLIGNGGNGGAGGAGANGGAGGNGGWLYGSGGNGGAGGAGPAGAIGAPGVAGGAGGAGGSAGLFGNGGAGGAGGAGGQGGAGIGGADGTKGGDAGAGGAGGAGGWIHGHGGVGGDGGTGGQGGDGVQGEPGDTGAAGGAGGAGGRGGDGGSAGWLSGNGGDAGTGGGGGNAGNGGNGGSAGWLSGNGGTGGGGGTAGAGGQGGNGNSGIDPGNGGQGADTGNAGNGGHGGSAAKLFGDGGAGGAGGMGSTGGTGGGGGFGGGTGGNGGNGHAGGAGGSGGTAGLLGSGGSGGTGGDGGNGGLGAGSGAKGNGGNGGDGGKGGDAQLIGNGGNGGNGGKGGTGLMPGINGTGGAGGSRGQISGNPGTPGQ.

One can recognise a PE domain in the interval 1–93 (MSYMIAVPDM…AGAYASAEAT (93 aa)). Gly residues-rich tracts occupy residues 264–286 (IHGHGGVGGDGGTGGQGGDGVQG), 292–384 (GAAG…AGNG), and 472–515 (NGGD…GGSR). 2 disordered regions span residues 264 to 384 (IHGH…AGNG) and 472 to 527 (NGGD…TPGQ).

This sequence belongs to the mycobacterial PE family. PGRS subfamily.

This is an uncharacterized protein from Mycobacterium tuberculosis (strain CDC 1551 / Oshkosh).